We begin with the raw amino-acid sequence, 351 residues long: Formyl peptide receptor-related sequence 1 (351 aa).

Over 1-27 (METNYSIPLNGSDVVIYDSTISRVLWI) the chain is Extracellular. N-linked (GlcNAc...) asparagine glycans are attached at residues asparagine 4 and asparagine 10. Residues 28-50 (LSMVVVSITFFLGVLGNGLVIWV) traverse the membrane as a helical segment. Residues 51–61 (AGFRMPHTVTT) lie on the Cytoplasmic side of the membrane. Residues 62-83 (IWYLNLALADFSFTATLPFLLV) form a helical membrane-spanning segment. The Extracellular portion of the chain corresponds to 84–100 (EMAMKEKWPFGWFLCKL). Cysteine 98 and cysteine 176 are oxidised to a cystine. A helical membrane pass occupies residues 101 to 121 (VHIAVDVNLFGSVFLIAVIAL). Residues 122–140 (DRCICVLHPVWAQNHRTVS) lie on the Cytoplasmic side of the membrane. The chain crosses the membrane as a helical span at residues 141–162 (LARNVVVGSWIFALILTLPLFL). The Extracellular segment spans residues 163–205 (FLTTVRDARGDVHCRLSFVSWGNSVEERLNTAITFVTTRGIIR). The helical transmembrane segment at 206–226 (FIVSFSLPMSFVAICYGLITT) threads the bilayer. The Cytoplasmic segment spans residues 227-242 (KIHKKAFVNSSRPFRV). The helical transmembrane segment at 243–266 (LTGVVASFFICWFPFQLVALLGTV) threads the bilayer. The Extracellular segment spans residues 267 to 286 (WLKEMQFSGSYKIIGRLVNP). A helical transmembrane segment spans residues 287-306 (TSSLAFFNSCLNPILYVFMG). At 307-351 (QDFQERLIHSLSSRLQRALSEDSGHISDTRTNLASLPEDIEIKAI) the chain is on the cytoplasmic side.

Belongs to the G-protein coupled receptor 1 family. In terms of tissue distribution, expressed exclusively in vomeronasal neurons. Expressed in 0.6 % of a subset of sensory neurons located in the basal layer of the vomeronasal organ. Each neuron appears to express only one receptor gene. Expressed mostly in neutrophils, followed by spleen and lung and expressed at very low levels in heart and liver.

The protein localises to the cell membrane. Functionally, low affinity receptor for N-formyl-methionyl peptides. Receptor for lipoxin A4. May have an olfactory function associated with the identification of pathogens or of pathogenic states. The protein is Formyl peptide receptor-related sequence 1 (Fpr-s1) of Mus musculus (Mouse).